Consider the following 333-residue polypeptide: Tetraacyldisaccharide 4'-kinase (333 aa).

Position 55–62 (55–62) interacts with ATP; sequence TAGGNGKT.

This sequence belongs to the LpxK family.

The catalysed reaction is a lipid A disaccharide + ATP = a lipid IVA + ADP + H(+). Its pathway is glycolipid biosynthesis; lipid IV(A) biosynthesis; lipid IV(A) from (3R)-3-hydroxytetradecanoyl-[acyl-carrier-protein] and UDP-N-acetyl-alpha-D-glucosamine: step 6/6. Functionally, transfers the gamma-phosphate of ATP to the 4'-position of a tetraacyldisaccharide 1-phosphate intermediate (termed DS-1-P) to form tetraacyldisaccharide 1,4'-bis-phosphate (lipid IVA). The protein is Tetraacyldisaccharide 4'-kinase of Pectobacterium carotovorum subsp. carotovorum (strain PC1).